Consider the following 374-residue polypeptide: Translocating chain-associated membrane protein 1 (374 aa).

Residues 1–29 (MAIRKKSNKNPPLLSHEFLLQNHADIVSC) lie on the Cytoplasmic side of the membrane. A helical membrane pass occupies residues 30–50 (LAMLFLLGLMFEVTAKGAIIF). The Lumenal portion of the chain corresponds to 51–76 (VALQYNVTRPATEEQATESASLYHYG). The N-linked (GlcNAc...) asparagine glycan is linked to N56. Residues 77–97 (IKDLATVLFYMLVAIIIHAII) traverse the membrane as a helical segment. At 98–121 (QEYVLDKINRRMHFSKTKHSKFNE) the chain is on the cytoplasmic side. In terms of domain architecture, TLC spans 117-326 (SKFNESGQLS…NFQLRRWREH (210 aa)). Residues 122–142 (SGQLSAFYLFACVWGTFILIS) traverse the membrane as a helical segment. The Lumenal segment spans residues 143–159 (ENYISDPTILWRAYPHN). A helical membrane pass occupies residues 160 to 180 (LMTFQTKFFYISQLAYWLHAF). Over 181 to 192 (PELYFQKTKKED) the chain is Cytoplasmic. Residues 193 to 213 (IPRQLVYIGLYLFHIAGAYLL) traverse the membrane as a helical segment. Over 214 to 217 (NLNH) the chain is Lumenal. A helical membrane pass occupies residues 218–238 (LGLVLLVLHYFVEFLFHISRL). Over 239 to 251 (FYFSDEKYQKGFS) the chain is Cytoplasmic. The helical transmembrane segment at 252–272 (LWAVLFVLGRLLTLILSVLTV) threads the bilayer. The Lumenal segment spans residues 273–297 (GFGLARAENQKLDFSTGNFNVLAVR). The helical transmembrane segment at 298 to 318 (IAVLASICITQAFMMWKFINF) threads the bilayer. Topologically, residues 319-374 (QLRRWREHSAFQAPPVKRKPAVTKGRSSRKGTENGVNGTVTSNGADSPRNRKEKSS) are cytoplasmic. Residues 333–374 (PVKRKPAVTKGRSSRKGTENGVNGTVTSNGADSPRNRKEKSS) form a disordered region. Residues 334–347 (VKRKPAVTKGRSSR) are compositionally biased toward basic residues. The segment covering 352–363 (NGVNGTVTSNGA) has biased composition (polar residues). Phosphoserine is present on S365.

It belongs to the TRAM family. As to quaternary structure, interacts with SEC61B. May interact with Derlin-1/DERL1. Post-translationally, N-glycosylated.

The protein localises to the endoplasmic reticulum membrane. Involved in the translocation of nascent protein chains into or through the endoplasmic reticulum (ER) membrane by facilitating the proper chain positioning at the SEC61 channel. Regulates the exposure of nascent secretory protein chain to the cytosol during translocation into the ER. May affect the phospholipid bilayer in the vicinity of the lateral gate of the SEC61 channel, thereby facilitating ER protein transport. Intimately associates with transmembrane (TM) domain of nascent membrane proteins during the entire integration process into the ER membrane. Associates with the second TM domain of G-protein-coupled receptor opsin/OPSD nascent chain in the ER membrane, which may facilitate its integration into the membrane. Under conditions of ER stress, participates in the disposal of misfolded ER membrane proteins during the unfolded protein response (UPR), an integrated stress response (ISR) pathway, by selectively retrotranslocating misfolded ER-membrane proteins from the ER into the cytosol where they are ubiquitinated and degraded by the proteasome. The sequence is that of Translocating chain-associated membrane protein 1 from Mus musculus (Mouse).